The following is a 389-amino-acid chain: Alanine racemase (389 aa).

Lys-46 functions as the Proton acceptor; specific for D-alanine in the catalytic mechanism. Position 46 is an N6-(pyridoxal phosphate)lysine (Lys-46). Arg-144 contributes to the substrate binding site. Tyr-275 functions as the Proton acceptor; specific for L-alanine in the catalytic mechanism. Met-323 is a binding site for substrate.

The protein belongs to the alanine racemase family. Pyridoxal 5'-phosphate serves as cofactor.

It carries out the reaction L-alanine = D-alanine. It functions in the pathway amino-acid biosynthesis; D-alanine biosynthesis; D-alanine from L-alanine: step 1/1. Functionally, catalyzes the interconversion of L-alanine and D-alanine. May also act on other amino acids. The chain is Alanine racemase (alr) from Mycolicibacterium smegmatis (strain ATCC 700084 / mc(2)155) (Mycobacterium smegmatis).